A 340-amino-acid chain; its full sequence is Phospho-N-acetylmuramoyl-pentapeptide-transferase (340 aa).

10 helical membrane passes run Phe5–Asn25, Thr50–Thr70, Ser73–Ile93, Phe113–Asp133, Ile147–Ser167, Gly178–Ser198, Leu218–Tyr238, Ile242–Leu262, Ile267–Val287, and Ile318–Val338.

Belongs to the glycosyltransferase 4 family. MraY subfamily. The cofactor is Mg(2+).

The protein localises to the cell membrane. The enzyme catalyses UDP-N-acetyl-alpha-D-muramoyl-L-alanyl-gamma-D-glutamyl-meso-2,6-diaminopimeloyl-D-alanyl-D-alanine + di-trans,octa-cis-undecaprenyl phosphate = di-trans,octa-cis-undecaprenyl diphospho-N-acetyl-alpha-D-muramoyl-L-alanyl-D-glutamyl-meso-2,6-diaminopimeloyl-D-alanyl-D-alanine + UMP. It participates in cell wall biogenesis; peptidoglycan biosynthesis. Its function is as follows. Catalyzes the initial step of the lipid cycle reactions in the biosynthesis of the cell wall peptidoglycan: transfers peptidoglycan precursor phospho-MurNAc-pentapeptide from UDP-MurNAc-pentapeptide onto the lipid carrier undecaprenyl phosphate, yielding undecaprenyl-pyrophosphoryl-MurNAc-pentapeptide, known as lipid I. The protein is Phospho-N-acetylmuramoyl-pentapeptide-transferase of Buchnera aphidicola subsp. Baizongia pistaciae (strain Bp).